Here is a 412-residue protein sequence, read N- to C-terminus: Subtilisin-like protease 6 (412 aa).

Positions 1-20 are cleaved as a signal peptide; the sequence is MGFITKAIPIVLAALSTVNG. Positions 21–127 are excised as a propeptide; it reads ARILEAGPHA…VRTTTNGTNL (107 aa). In terms of domain architecture, Inhibitor I9 spans 36-120; that stretch reads KYIVVMKKDV…FIEPDFVVRT (85 aa). Positions 135–412 constitute a Peptidase S8 domain; sequence SWGLARVGSK…SKLIYNGSGK (278 aa). Residues D167 and H198 each act as charge relay system in the active site. N-linked (GlcNAc...) asparagine glycosylation is found at N252 and N264. Catalysis depends on S358, which acts as the Charge relay system. N408 is a glycosylation site (N-linked (GlcNAc...) asparagine).

The protein belongs to the peptidase S8 family.

It is found in the secreted. In terms of biological role, secreted subtilisin-like serine protease with keratinolytic activity that contributes to pathogenicity. In Arthroderma benhamiae (strain ATCC MYA-4681 / CBS 112371) (Trichophyton mentagrophytes), this protein is Subtilisin-like protease 6 (SUB6).